The primary structure comprises 198 residues: MQSLHLELTAGVDEAGRGPLAGPVVAAAVILDPSRPIDGLNDSKQLSAKRRDRLFDLIIERAAAYCIAEASVEEIDRLNILQATMLAMQRAIAGLSVTPQLVLIDGNRSPLLPMRSEAIVKGDARVTSIGAASILAKVHRDRLCAKLHETFPLYGFAVHKGYGTADHLAALVQHGACPEHRRTFSPVRAALARAAAHA.

In terms of domain architecture, RNase H type-2 spans 7–196 (ELTAGVDEAG…VRAALARAAA (190 aa)). Asp-13, Glu-14, and Asp-105 together coordinate a divalent metal cation.

It belongs to the RNase HII family. Mn(2+) is required as a cofactor. Requires Mg(2+) as cofactor.

It localises to the cytoplasm. It carries out the reaction Endonucleolytic cleavage to 5'-phosphomonoester.. In terms of biological role, endonuclease that specifically degrades the RNA of RNA-DNA hybrids. This Methylibium petroleiphilum (strain ATCC BAA-1232 / LMG 22953 / PM1) protein is Ribonuclease HII 1.